The following is a 207-amino-acid chain: Dephospho-CoA kinase (207 aa).

Residues 12 to 207 enclose the DPCK domain; it reads LIGITGMIGG…LYSTLLGKML (196 aa). 20–25 is an ATP binding site; it reads GGGKST.

The protein belongs to the CoaE family.

It localises to the cytoplasm. It catalyses the reaction 3'-dephospho-CoA + ATP = ADP + CoA + H(+). It functions in the pathway cofactor biosynthesis; coenzyme A biosynthesis; CoA from (R)-pantothenate: step 5/5. Catalyzes the phosphorylation of the 3'-hydroxyl group of dephosphocoenzyme A to form coenzyme A. This chain is Dephospho-CoA kinase, found in Leptospira interrogans serogroup Icterohaemorrhagiae serovar Lai (strain 56601).